The following is a 461-amino-acid chain: MAQKLYAGAKLRELRVKLGLTQKVFAERLGASLPYLNQMENNHRPVSATVVLALAQEFGVDVTKLTTSEAERIVTDMREALADPVFTDSPPLADLRLVASNAPAFARAFLDLHRAYRQTHERLASLDEALGRDEADLRPSPWEEVRDFFHYCDNYLDAVDRAAEHYAAPGGVRRDVFSAAMETLTRAGLDLQISDMPAIRSREGNALRLSARAAAPTQRFQLLHQVALLTQNDLLEATLDLARFQTAEAREIAKIGLANYFAGAALLPYRPFLQAAAETRHDLERLADLFGASIEQVAHRLSTLQRPGAKGVPFFFVRVDQAGTITKRHSATRFQFARFGGACPLWNVHRAFETPGRFLRQLAQTPDGVRYLLLARDVSKPGGSFTAPVRRYAIGLGCEVQHADALVYADGLDLKGSFEPIGISCRICDRQECHQRSVPPLEKRLRVDPDRRGLLPYEIVD.

One can recognise an HTH cro/C1-type domain in the interval 11-65 (LRELRVKLGLTQKVFAERLGASLPYLNQMENNHRPVSATVVLALAQEFGVDVTKL). Positions 22–41 (QKVFAERLGASLPYLNQMEN) form a DNA-binding region, H-T-H motif.

It belongs to the short-chain fatty acyl-CoA assimilation regulator (ScfR) family.

In terms of biological role, transcriptional regulator that controls propionyl-CoA assimilation through the methylmalonyl-CoA pathway via regulation of pccB expression. The sequence is that of Propionyl-CoA carboxylase regulator from Cereibacter sphaeroides (strain ATCC 17023 / DSM 158 / JCM 6121 / CCUG 31486 / LMG 2827 / NBRC 12203 / NCIMB 8253 / ATH 2.4.1.) (Rhodobacter sphaeroides).